The chain runs to 169 residues: MLEYLIVGQLINTHGVKGELKATSQTDDPQRFKKLKWVYIDKNGSLEKYDINGVKFFKQFIIIKFQGVDSIEEAEKLKGFYIKVDRANAVKLPENSFFISDIIGLKVYDENNQLLGELKDVIQTGSNDVYVVRDSDSKEILIPALKSVVKEVSIEEGKISVILPKGLLD.

Residues 93–167 (PENSFFISDI…KISVILPKGL (75 aa)) enclose the PRC barrel domain.

The protein belongs to the RimM family. Binds ribosomal protein uS19.

The protein resides in the cytoplasm. Functionally, an accessory protein needed during the final step in the assembly of 30S ribosomal subunit, possibly for assembly of the head region. Essential for efficient processing of 16S rRNA. May be needed both before and after RbfA during the maturation of 16S rRNA. It has affinity for free ribosomal 30S subunits but not for 70S ribosomes. The sequence is that of Ribosome maturation factor RimM from Ruminiclostridium cellulolyticum (strain ATCC 35319 / DSM 5812 / JCM 6584 / H10) (Clostridium cellulolyticum).